A 310-amino-acid polypeptide reads, in one-letter code: Porphobilinogen deaminase (310 aa).

The residue at position 242 (C242) is an S-(dipyrrolylmethanemethyl)cysteine.

The protein belongs to the HMBS family. Monomer. It depends on dipyrromethane as a cofactor.

It carries out the reaction 4 porphobilinogen + H2O = hydroxymethylbilane + 4 NH4(+). The protein operates within porphyrin-containing compound metabolism; protoporphyrin-IX biosynthesis; coproporphyrinogen-III from 5-aminolevulinate: step 2/4. Tetrapolymerization of the monopyrrole PBG into the hydroxymethylbilane pre-uroporphyrinogen in several discrete steps. The chain is Porphobilinogen deaminase from Shewanella oneidensis (strain ATCC 700550 / JCM 31522 / CIP 106686 / LMG 19005 / NCIMB 14063 / MR-1).